The sequence spans 417 residues: Serine hydroxymethyltransferase 2 (417 aa).

Residues L121 and 125–127 contribute to the (6S)-5,6,7,8-tetrahydrofolate site; that span reads GHL. Position 230 is an N6-(pyridoxal phosphate)lysine (K230). 355–357 serves as a coordination point for (6S)-5,6,7,8-tetrahydrofolate; sequence SPF.

Belongs to the SHMT family. As to quaternary structure, homodimer. The cofactor is pyridoxal 5'-phosphate.

Its subcellular location is the cytoplasm. It catalyses the reaction (6R)-5,10-methylene-5,6,7,8-tetrahydrofolate + glycine + H2O = (6S)-5,6,7,8-tetrahydrofolate + L-serine. The protein operates within one-carbon metabolism; tetrahydrofolate interconversion. It participates in amino-acid biosynthesis; glycine biosynthesis; glycine from L-serine: step 1/1. Catalyzes the reversible interconversion of serine and glycine with tetrahydrofolate (THF) serving as the one-carbon carrier. This reaction serves as the major source of one-carbon groups required for the biosynthesis of purines, thymidylate, methionine, and other important biomolecules. Also exhibits THF-independent aldolase activity toward beta-hydroxyamino acids, producing glycine and aldehydes, via a retro-aldol mechanism. The protein is Serine hydroxymethyltransferase 2 of Colwellia psychrerythraea (strain 34H / ATCC BAA-681) (Vibrio psychroerythus).